Reading from the N-terminus, the 513-residue chain is GMP synthase [glutamine-hydrolyzing] (513 aa).

The region spanning 9–198 is the Glutamine amidotransferase type-1 domain; that stretch reads LILVLDFGSQ…VRRVCNCTGE (190 aa). The active-site Nucleophile is the Cys86. Active-site residues include His172 and Glu174. Residues 199–388 form the GMPS ATP-PPase domain; the sequence is WTMENFIEIE…LGIPEHLVWR (190 aa). 226 to 232 serves as a coordination point for ATP; that stretch reads SGGVDSS.

Homodimer.

It carries out the reaction XMP + L-glutamine + ATP + H2O = GMP + L-glutamate + AMP + diphosphate + 2 H(+). The protein operates within purine metabolism; GMP biosynthesis; GMP from XMP (L-Gln route): step 1/1. Catalyzes the synthesis of GMP from XMP. This chain is GMP synthase [glutamine-hydrolyzing], found in Staphylococcus epidermidis (strain ATCC 12228 / FDA PCI 1200).